The following is a 796-amino-acid chain: Inactive dipeptidyl peptidase 10 (796 aa).

The Cytoplasmic portion of the chain corresponds to 1–34; sequence MNQTASVSHHIKCQPSKTIKELGSNSPPQRNWKG. The interval 1 to 55 is mediates effects on KCND2; sequence MNQTASVSHHIKCQPSKTIKELGSNSPPQRNWKGIAIALLVILVVCSLITMSVIL. Residues 35–55 traverse the membrane as a helical; Signal-anchor for type II membrane protein segment; the sequence is IAIALLVILVVCSLITMSVIL. The Extracellular portion of the chain corresponds to 56–796; that stretch reads LTPDELTNSS…VLPQEPEEDE (741 aa). N-linked (GlcNAc...) asparagine glycans are attached at residues asparagine 63, asparagine 90, asparagine 111, and asparagine 119. A phosphotyrosine mark is found at tyrosine 138 and tyrosine 143. N-linked (GlcNAc...) asparagine glycosylation is found at asparagine 257, asparagine 342, and asparagine 748.

It belongs to the peptidase S9B family. DPPIV subfamily. May form oligomers. Interacts with KCND1. Interacts with KCND2. Identified in a complex with KCND2 and KCNIP3. Post-translationally, N-glycosylation is important for cell surface expression, specially at Asn-257, which is crucial. Detected in brain cortex, hippocampus, thalamus and cerebellum Purkinje cells (at protein level).

The protein localises to the cell membrane. In terms of biological role, promotes cell surface expression of the potassium channel KCND2. Modulates the activity and gating characteristics of the potassium channel KCND2. Has no dipeptidyl aminopeptidase activity. This Rattus norvegicus (Rat) protein is Inactive dipeptidyl peptidase 10 (Dpp10).